We begin with the raw amino-acid sequence, 250 residues long: Probable 2' cyclic ADP-D-ribose synthase TcpB (250 aa).

Residues 1-46 (MSKEKQAQSKAHKAQQAISSAKSLSTQKSKMSELERATRDGAAIGK) are disordered. Low complexity predominate over residues 14–23 (AQQAISSAKS). A compositionally biased stretch (basic and acidic residues) spans 30–39 (KMSELERATR). One can recognise a TIR domain in the interval 117–250 (EEYDFFISHA…EIAKELHSLI (134 aa)). The active site involves Glu-192.

In terms of assembly, homodimer. Interacts with host TIRAP. Interacts with host TLR4, abolishes the interaction of host TIRAP with TLR4.

The protein resides in the secreted. The protein localises to the host cell membrane. The catalysed reaction is NAD(+) + H2O = ADP-D-ribose + nicotinamide + H(+). It catalyses the reaction NAD(+) = 2'cADPR + nicotinamide + H(+). Virulence factor that interferes with host Toll-like receptor 2 (TLR2) signaling, resulting in the reduction of dendritic cell maturation, inhibition of pro-inflammatory cytokine secretion and impaired NF-kappa-B activation in macrophages. Also acts on host TLR4. Binds host lipids. Has NAD(+) hydrolase (NADase) activity, catalyzes cleavage of NAD(+) into ADP-D-ribose (ADPR) and nicotinamide, also generates a cyclization variant of cyclic ADPR (cADPR), termed v-cADPR (probably 2'cADPR). The chain is Probable 2' cyclic ADP-D-ribose synthase TcpB from Brucella abortus (strain 2308).